Here is a 291-residue protein sequence, read N- to C-terminus: 4-hydroxy-tetrahydrodipicolinate synthase (291 aa).

T45 serves as a coordination point for pyruvate. The active-site Proton donor/acceptor is Y133. K161 functions as the Schiff-base intermediate with substrate in the catalytic mechanism. I203 lines the pyruvate pocket.

It belongs to the DapA family. In terms of assembly, homotetramer; dimer of dimers.

The protein localises to the cytoplasm. The catalysed reaction is L-aspartate 4-semialdehyde + pyruvate = (2S,4S)-4-hydroxy-2,3,4,5-tetrahydrodipicolinate + H2O + H(+). It participates in amino-acid biosynthesis; L-lysine biosynthesis via DAP pathway; (S)-tetrahydrodipicolinate from L-aspartate: step 3/4. Catalyzes the condensation of (S)-aspartate-beta-semialdehyde [(S)-ASA] and pyruvate to 4-hydroxy-tetrahydrodipicolinate (HTPA). This chain is 4-hydroxy-tetrahydrodipicolinate synthase, found in Saccharophagus degradans (strain 2-40 / ATCC 43961 / DSM 17024).